A 365-amino-acid polypeptide reads, in one-letter code: MMASRRISVLSSLGLFACLLSPVVAQTFTYCNPLEKDDCPNAPALGQNYTTYLNSSLNPDVWNATSGLVEISDAGSNFTIHKALDSPTIQSFFYIFFGTVEVHMKAATGRGVVSSIVIQSEVLDEIDWEWVGSEPDKVQTNYFGKGNTTSYDRGKTFDIKGAMDDFHNYTVNWTPEKIEWYIDTVLVRTLKYEEALGGKNFPQTPSTVRLGIWPGGDPQNKKGVIEWAGGEIDYEKTPYIMSVKELKVVDAHKGKEYSYSDRSGDWQSIKVIDGVSDIANEINKPPPKSLAQRWRELPTAAKIAIFASIGGLVILGMAIIAFCCVKQRRAGRREFSMENSKFVEDQNNVMAMRTQWNHKYKPVGS.

The signal sequence occupies residues 1–25 (MMASRRISVLSSLGLFACLLSPVVA). At 26–302 (QTFTYCNPLE…RWRELPTAAK (277 aa)) the chain is on the extracellular side. Cys31 and Cys39 are oxidised to a cystine. N-linked (GlcNAc...) asparagine glycosylation is found at Asn48, Asn54, Asn63, and Asn77. A GH16 domain is found at 50–243 (TTYLNSSLNP…YEKTPYIMSV (194 aa)). Residue Glu125 is the Nucleophile of the active site. Glu129 functions as the Proton donor in the catalytic mechanism. Residue Glu129 participates in chitin binding. Residues Asn147 and Asn168 are each glycosylated (N-linked (GlcNAc...) asparagine). 2 residues coordinate chitin: Arg209 and Trp213. The helical transmembrane segment at 303–323 (IAIFASIGGLVILGMAIIAFC) threads the bilayer. Residues 324-365 (CVKQRRAGRREFSMENSKFVEDQNNVMAMRTQWNHKYKPVGS) lie on the Cytoplasmic side of the membrane.

The protein belongs to the glycosyl hydrolase 16 family. CRH1 subfamily.

The protein resides in the membrane. The catalysed reaction is Random endo-hydrolysis of N-acetyl-beta-D-glucosaminide (1-&gt;4)-beta-linkages in chitin and chitodextrins.. Its function is as follows. Dual chitinase/transglycosylase that plays a role in cell wall architecture. Chitinase and transglycosylase activities are coupled. Required for the polysaccharide cross-linking at the septa and the cell wall. More specifically, transfers chitin to 1,6-beta-glucan in the cell wall. Plays an important role in fungal pathogenesis. Involved in cell wall assembly and regeneration, filamentation, and adherence to host cells. This Arthroderma benhamiae (strain ATCC MYA-4681 / CBS 112371) (Trichophyton mentagrophytes) protein is Crh-like protein ARB_03382.